The chain runs to 230 residues: 7-cyano-7-deazaguanine synthase (230 aa).

10 to 20 (LSGGLDSATTA) is an ATP binding site. C191, C199, C202, and C205 together coordinate Zn(2+).

The protein belongs to the QueC family. Zn(2+) is required as a cofactor.

It carries out the reaction 7-carboxy-7-deazaguanine + NH4(+) + ATP = 7-cyano-7-deazaguanine + ADP + phosphate + H2O + H(+). It participates in purine metabolism; 7-cyano-7-deazaguanine biosynthesis. Catalyzes the ATP-dependent conversion of 7-carboxy-7-deazaguanine (CDG) to 7-cyano-7-deazaguanine (preQ(0)). This chain is 7-cyano-7-deazaguanine synthase, found in Gloeothece citriformis (strain PCC 7424) (Cyanothece sp. (strain PCC 7424)).